Consider the following 564-residue polypeptide: Dihydroxy-acid dehydratase 2 (564 aa).

Cys59 is a binding site for [2Fe-2S] cluster. A Mg(2+)-binding site is contributed by Asp91. Cys132 is a [2Fe-2S] cluster binding site. Residues Asp133 and Lys134 each coordinate Mg(2+). Position 134 is an N6-carboxylysine (Lys134). A [2Fe-2S] cluster-binding site is contributed by Cys204. Glu454 contacts Mg(2+). Ser480 serves as the catalytic Proton acceptor.

Belongs to the IlvD/Edd family. In terms of assembly, homodimer. [2Fe-2S] cluster is required as a cofactor. It depends on Mg(2+) as a cofactor.

It catalyses the reaction (2R)-2,3-dihydroxy-3-methylbutanoate = 3-methyl-2-oxobutanoate + H2O. The enzyme catalyses (2R,3R)-2,3-dihydroxy-3-methylpentanoate = (S)-3-methyl-2-oxopentanoate + H2O. Its pathway is amino-acid biosynthesis; L-isoleucine biosynthesis; L-isoleucine from 2-oxobutanoate: step 3/4. It participates in amino-acid biosynthesis; L-valine biosynthesis; L-valine from pyruvate: step 3/4. In terms of biological role, functions in the biosynthesis of branched-chain amino acids. Catalyzes the dehydration of (2R,3R)-2,3-dihydroxy-3-methylpentanoate (2,3-dihydroxy-3-methylvalerate) into 2-oxo-3-methylpentanoate (2-oxo-3-methylvalerate) and of (2R)-2,3-dihydroxy-3-methylbutanoate (2,3-dihydroxyisovalerate) into 2-oxo-3-methylbutanoate (2-oxoisovalerate), the penultimate precursor to L-isoleucine and L-valine, respectively. In Staphylococcus saprophyticus subsp. saprophyticus (strain ATCC 15305 / DSM 20229 / NCIMB 8711 / NCTC 7292 / S-41), this protein is Dihydroxy-acid dehydratase 2.